We begin with the raw amino-acid sequence, 394 residues long: Phosphoglycerate kinase (394 aa).

Substrate-binding positions include 21–23, R36, 59–62, R118, and R151; these read DFN and HLGR. S183 is subject to Phosphoserine. ATP is bound by residues K201 and G292. Position 299 is a phosphothreonine (T299). ATP contacts are provided by residues E323 and 350–353; that span reads GGDS.

It belongs to the phosphoglycerate kinase family. In terms of assembly, monomer.

Its subcellular location is the cytoplasm. It carries out the reaction (2R)-3-phosphoglycerate + ATP = (2R)-3-phospho-glyceroyl phosphate + ADP. It participates in carbohydrate degradation; glycolysis; pyruvate from D-glyceraldehyde 3-phosphate: step 2/5. The protein is Phosphoglycerate kinase of Bacillus thuringiensis (strain Al Hakam).